The following is a 709-amino-acid chain: Putative extracellular sulfatase Sulf-1 homolog (709 aa).

A signal peptide spans 1-27; the sequence is MISNLRISNYFIIFYVLFLIIPIKVTS. The Ca(2+) site is built by aspartate 43, aspartate 44, and cysteine 79. Cysteine 79 acts as the Nucleophile in catalysis. 3-oxoalanine (Cys) is present on cysteine 79. Asparagine 103, asparagine 162, and asparagine 189 each carry an N-linked (GlcNAc...) asparagine glycan. Positions 308 and 309 each coordinate Ca(2+). N-linked (GlcNAc...) asparagine glycosylation is found at asparagine 344, asparagine 468, asparagine 500, asparagine 540, asparagine 566, asparagine 610, and asparagine 620.

The protein belongs to the sulfatase family. The cofactor is Ca(2+). Post-translationally, the conversion to 3-oxoalanine (also known as C-formylglycine, FGly), of a serine or cysteine residue in prokaryotes and of a cysteine residue in eukaryotes, is critical for catalytic activity.

The protein localises to the endoplasmic reticulum. It localises to the golgi apparatus. The protein resides in the golgi stack. Its subcellular location is the cell surface. The polypeptide is Putative extracellular sulfatase Sulf-1 homolog (sul-1) (Caenorhabditis elegans).